Reading from the N-terminus, the 427-residue chain is Trigger factor (427 aa).

The region spanning 163-248 (GDTVVIDFVG…IHEVKAKEVP (86 aa)) is the PPIase FKBP-type domain.

The protein belongs to the FKBP-type PPIase family. Tig subfamily.

The protein resides in the cytoplasm. It carries out the reaction [protein]-peptidylproline (omega=180) = [protein]-peptidylproline (omega=0). In terms of biological role, involved in protein export. Acts as a chaperone by maintaining the newly synthesized protein in an open conformation. Functions as a peptidyl-prolyl cis-trans isomerase. The sequence is that of Trigger factor from Streptococcus suis (strain 05ZYH33).